The primary structure comprises 89 residues: Neurotoxin LmNaTx28 (89 aa).

A signal peptide spans 1–18; it reads MNLPTVLCIIALILGVRS. In terms of domain architecture, LCN-type CS-alpha/beta spans 20-85; sequence KNGFFTKLGK…VADSSEKACQ (66 aa). Intrachain disulfides connect Cys33-Cys57, Cys43-Cys62, Cys47-Cys64, and Cys58-Cys84.

The protein belongs to the long (4 C-C) scorpion toxin superfamily. Sodium channel inhibitor family. Beta subfamily. Expressed by the venom gland.

The protein localises to the secreted. Binds voltage-independently at site-4 of sodium channels (Nav) and shift the voltage of activation toward more negative potentials thereby affecting sodium channel activation and promoting spontaneous and repetitive firing. This Lychas mucronatus (Chinese swimming scorpion) protein is Neurotoxin LmNaTx28.